The primary structure comprises 714 residues: Polyribonucleotide nucleotidyltransferase (714 aa).

Mg(2+) contacts are provided by Asp-489 and Asp-495. The region spanning Pro-556–Ile-615 is the KH domain. Positions Gly-625–Lys-693 constitute an S1 motif domain. The segment at Ser-691–Asp-714 is disordered. The segment covering Pro-700–Asp-714 has biased composition (basic and acidic residues).

It belongs to the polyribonucleotide nucleotidyltransferase family. Requires Mg(2+) as cofactor.

It is found in the cytoplasm. The catalysed reaction is RNA(n+1) + phosphate = RNA(n) + a ribonucleoside 5'-diphosphate. Its function is as follows. Involved in mRNA degradation. Catalyzes the phosphorolysis of single-stranded polyribonucleotides processively in the 3'- to 5'-direction. The protein is Polyribonucleotide nucleotidyltransferase of Streptococcus equi subsp. equi (strain 4047).